The following is an 808-amino-acid chain: MKLSLDWMNDFTPLKEVGLDAILKKIAISVCEIDDATEFRPELDFVKIVRIESLEKHPSADKLQIAQVFDGSSKSQIVTGVTNVKIGDLVPLAIPGAKLGDKEILESELRGVKSSGMLCSEKELFLSEEGNGVWILNGLDQAEVGKTIRSFLYYNDIIFEVDNKSITHRPDLWSHFGFARELASQLRLPIVFNPFESLWNFDLSVKLPKVLENQNAHSYYASSISGVSVFPSKRKFQSRLQKCGVRVINNVVDVSNYVMLEMGQPTHFFDKKFLENQGGISLEVSFAKKGESFALLDETSPALEEEVLLIRNQGKPVAIAGVMGGKESAVQNTTTEIVMESAVFMRERIRKSIRSTGIRSDSSVRYEKGLEATTTLPVIRRALNLLKENGCSELKASEPVGFLHIPHKEVRIHTDIHFINAKLGVTLSQGDITDILERLHFIVSWKGEHLEVLVPKFRHNYDVTIPEDLVEEIGRTKGYDTIQVSPLLAEVKTPIRNLNRELERKCKTFFAIALKYHEVFNYSFQSYKENEFSGDPKLSVKIKNEMPEEQSVLRNSLLPSLLKNTRTNQDRFSEIKIFEFGRVYFNLPEPENEKKIFAFAVSLDKKSSEPDLKLLEEDFLKIKKEVESFLESIQIYEYTWKIQQETIFHPGANLCLVARSGKDGLETIVGNLGYVHPAILDSFELKKRVIYGSFEFERIVELWNQNRKVSRFVTPSQFPEAEIDLSILVGEKENTNVFTDLVKLERIPELKEGWVYSQFMGGNVPEGKKSVSYRFRLVNYERTFTQERIKEISDQLVILAGKNGFVLR.

A tRNA-binding domain is found at 40 to 149 (RPELDFVKIV…DQAEVGKTIR (110 aa)). The 78-residue stretch at 407–484 (HKEVRIHTDI…RTKGYDTIQV (78 aa)) folds into the B5 domain. The Mg(2+) site is built by Asp462, Asp468, Glu471, and Glu472. The 93-residue stretch at 716 to 808 (SQFPEAEIDL…LAGKNGFVLR (93 aa)) folds into the FDX-ACB domain.

This sequence belongs to the phenylalanyl-tRNA synthetase beta subunit family. Type 1 subfamily. In terms of assembly, tetramer of two alpha and two beta subunits. The cofactor is Mg(2+).

It localises to the cytoplasm. The catalysed reaction is tRNA(Phe) + L-phenylalanine + ATP = L-phenylalanyl-tRNA(Phe) + AMP + diphosphate + H(+). This chain is Phenylalanine--tRNA ligase beta subunit, found in Leptospira interrogans serogroup Icterohaemorrhagiae serovar copenhageni (strain Fiocruz L1-130).